Here is a 258-residue protein sequence, read N- to C-terminus: MTQHSRDTPQFYLTAPSPCPYLPGRHERKVFTHLVGGKAGELNDLLTHGGFRRSQSIAYRPACDQCRACVSVRVVANEFRASRGQRKILARNADVIGELRSAVPTSEQYSVFRAYLDRRHRHGGMADMTVLDYAMMVEDSHVKTRIIEYRRRGPDSGITGRGEDLLAVALTDILNDGLSMVYSFFEPGEDSRSLGTFMILDHIARARRLGLPYVYLGYWIEGSKKMDYKGRYLPQQRLAPSGWIRVDASGESAVEPQD.

This sequence belongs to the R-transferase family. Bpt subfamily.

The protein localises to the cytoplasm. The enzyme catalyses N-terminal L-glutamyl-[protein] + L-leucyl-tRNA(Leu) = N-terminal L-leucyl-L-glutamyl-[protein] + tRNA(Leu) + H(+). The catalysed reaction is N-terminal L-aspartyl-[protein] + L-leucyl-tRNA(Leu) = N-terminal L-leucyl-L-aspartyl-[protein] + tRNA(Leu) + H(+). Functionally, functions in the N-end rule pathway of protein degradation where it conjugates Leu from its aminoacyl-tRNA to the N-termini of proteins containing an N-terminal aspartate or glutamate. The chain is Aspartate/glutamate leucyltransferase from Rhodopseudomonas palustris (strain BisB18).